We begin with the raw amino-acid sequence, 184 residues long: Transposon Tn917 resolvase (184 aa).

The region spanning 1–134 is the Resolvase/invertase-type recombinase catalytic domain; that stretch reads MIFGYARVST…SGLKAARVRG (134 aa). The active-site O-(5'-phospho-DNA)-serine intermediate is the serine 9. Residues 161-180 constitute a DNA-binding region (H-T-H motif); sequence IRQILDASKLSKTTFYRYLN.

The protein belongs to the site-specific recombinase resolvase family.

Resolvase catalyzes the resolution (a site-specific recombination) of the cointegrated replicon to yield the final transposition products. In Enterococcus faecalis (Streptococcus faecalis), this protein is Transposon Tn917 resolvase (tnpR).